Here is a 513-residue protein sequence, read N- to C-terminus: NADH-quinone oxidoreductase subunit N (513 aa).

14 consecutive transmembrane segments (helical) span residues 20–40, 49–69, 88–108, 117–137, 144–164, 178–198, 219–239, 260–280, 295–315, 323–343, 351–371, 394–414, 429–451, and 474–494; these read SVGF…LIVV, STLL…FIYQ, FAIF…VITM, ISSM…MMMM, LMIF…AGYF, LIYG…IYGV, FVML…IGAV, LSVA…YVAL, WFTL…VVAL, LLAY…IVMD, LFYL…VVLI, GAAL…IGFI, IFMW…YMLI, and LVAQ…GLFF.

It belongs to the complex I subunit 2 family. NDH-1 is composed of 14 different subunits. Subunits NuoA, H, J, K, L, M, N constitute the membrane sector of the complex.

The protein resides in the cell inner membrane. It carries out the reaction a quinone + NADH + 5 H(+)(in) = a quinol + NAD(+) + 4 H(+)(out). Functionally, NDH-1 shuttles electrons from NADH, via FMN and iron-sulfur (Fe-S) centers, to quinones in the respiratory chain. The immediate electron acceptor for the enzyme in this species is believed to be a menaquinone. Couples the redox reaction to proton translocation (for every two electrons transferred, four hydrogen ions are translocated across the cytoplasmic membrane), and thus conserves the redox energy in a proton gradient. The sequence is that of NADH-quinone oxidoreductase subunit N from Chlorobium chlorochromatii (strain CaD3).